The sequence spans 663 residues: UvrABC system protein B (663 aa).

The Helicase ATP-binding domain occupies 26-414; it reads DGLESGLAKQ…DNVAEQVVRP (389 aa). 39 to 46 is an ATP binding site; the sequence is GVTGSGKT. Residues 92–115 carry the Beta-hairpin motif; the sequence is YYDYYQPEAYVPASDTFIEKDASI. One can recognise a Helicase C-terminal domain in the interval 430 to 596; the sequence is QVDDLMSEIR…GINKSVEDIL (167 aa). Positions 624–659 constitute a UVR domain; the sequence is AKEINALEKQMYAHAQNMEFELAAKIRDEYLLLKEQ.

It belongs to the UvrB family. As to quaternary structure, forms a heterotetramer with UvrA during the search for lesions. Interacts with UvrC in an incision complex.

It localises to the cytoplasm. Its function is as follows. The UvrABC repair system catalyzes the recognition and processing of DNA lesions. A damage recognition complex composed of 2 UvrA and 2 UvrB subunits scans DNA for abnormalities. Upon binding of the UvrA(2)B(2) complex to a putative damaged site, the DNA wraps around one UvrB monomer. DNA wrap is dependent on ATP binding by UvrB and probably causes local melting of the DNA helix, facilitating insertion of UvrB beta-hairpin between the DNA strands. Then UvrB probes one DNA strand for the presence of a lesion. If a lesion is found the UvrA subunits dissociate and the UvrB-DNA preincision complex is formed. This complex is subsequently bound by UvrC and the second UvrB is released. If no lesion is found, the DNA wraps around the other UvrB subunit that will check the other stand for damage. The chain is UvrABC system protein B from Legionella pneumophila (strain Paris).